The chain runs to 445 residues: Baccatin III:3-amino-3-phenylpropanoyltransferase (445 aa).

It belongs to the plant acyltransferase family.

It carries out the reaction (3R)-3-amino-3-phenylpropanoyl-CoA + baccatin III = 3'-N-debenzoyl-2'-deoxytaxol + CoA. It participates in alkaloid biosynthesis; taxol biosynthesis. Acyltransferase involved in taxol biosynthesis. Catalyzes the selective 13-O-acylation of baccatin III with (3R)-3-amino-3-phenylpropanoyl-CoA as the acyl donor to form 3'-N-debenzoyl-2'-deoxytaxol. This Taxus cuspidata (Japanese yew) protein is Baccatin III:3-amino-3-phenylpropanoyltransferase.